A 51-amino-acid polypeptide reads, in one-letter code: Large ribosomal subunit protein eL39 (51 aa).

This sequence belongs to the eukaryotic ribosomal protein eL39 family.

The protein is Large ribosomal subunit protein eL39 of Thermococcus sibiricus (strain DSM 12597 / MM 739).